Reading from the N-terminus, the 490-residue chain is Cruciferin BnC1 (490 aa).

The first 23 residues, 1–23 (MARLSSLLSFSLALLIFLHGSTA), serve as a signal peptide directing secretion. Disulfide bonds link Cys-30-Cys-63 and Cys-106-Cys-307. Cupin type-1 domains are found at residues 35-263 (LNAL…RTAQ) and 313-462 (DNLD…EEAR). Position 109 is a phosphothreonine (Thr-109). The disordered stretch occupies residues 113 to 164 (SSVFQPSGGSPSGEGQGQGQQGQGQGHQGQGQGQQGQQGQQGQQSQGQGFRD). Residues 122-148 (SPSGEGQGQGQQGQGQGHQGQGQGQQG) show a composition bias toward gly residues. Residues 149-161 (QQGQQGQQSQGQG) show a composition bias toward low complexity. At Tyr-330 the chain carries Phosphotyrosine. A Phosphoserine modification is found at Ser-332. A Phosphothreonine modification is found at Thr-426.

The protein belongs to the 11S seed storage protein (globulins) family. Hexamer; each subunit is composed of an acidic and a basic chain derived from a single precursor and linked by a disulfide bond.

In terms of biological role, this is a seed storage protein. The chain is Cruciferin BnC1 (BnC1) from Brassica napus (Rape).